The following is a 350-amino-acid chain: Delta(6)-protoilludene synthase STEHIDRAFT_64702 (350 aa).

Positions 89, 225, 229, and 233 each coordinate Mg(2+). The D(D/E)XX(D/E) motif motif lies at D89–D93. Residues N225 to E233 carry the NSE motif motif. Residues R314 and Y315 each coordinate (2E,6E)-farnesyl diphosphate.

It belongs to the terpene synthase family. Mg(2+) serves as cofactor. Requires Mn(2+) as cofactor. It depends on Ca(2+) as a cofactor. The cofactor is Ni(2+). Co(2+) is required as a cofactor.

It carries out the reaction (2E,6E)-farnesyl diphosphate = Delta(6)-protoilludene + diphosphate. The enzyme catalyses (2E,6E)-farnesyl diphosphate = alpha-selinene + diphosphate. Its activity is regulated as follows. Ca(2+) switches the cyclization mechanism of delta(6)-protoilludene synthase from 1,11 to 1,10 cyclization which leads to the production of beta-elemene. Terpene cyclase that catalyzes the cyclization of farnesyl diphosphate (FPP) to delta(6)-protoilludene. In presence of Ca(2+), a significant switch from 1,11 to a dual 1,11/1,10 cyclization occurs, producing beta-elemene as the major product, with lower levels of delta(6)-protoilludene and (E)-beta-caryophyllene, and traces of beta-selinene and alpha-selinene. The chain is Delta(6)-protoilludene synthase STEHIDRAFT_64702 from Stereum hirsutum (strain FP-91666) (White-rot fungus).